Consider the following 275-residue polypeptide: Formamidopyrimidine-DNA glycosylase (275 aa).

The active-site Schiff-base intermediate with DNA is Pro-2. The Proton donor role is filled by Glu-3. Lys-60 (proton donor; for beta-elimination activity) is an active-site residue. Positions 93 and 112 each coordinate DNA. The segment at 240 to 274 (FVYGRKDEPCKKCGSPIEKTVVGGRGTHFCIKCQK) adopts an FPG-type zinc-finger fold. Arg-264 acts as the Proton donor; for delta-elimination activity in catalysis.

Belongs to the FPG family. Monomer. The cofactor is Zn(2+).

It catalyses the reaction Hydrolysis of DNA containing ring-opened 7-methylguanine residues, releasing 2,6-diamino-4-hydroxy-5-(N-methyl)formamidopyrimidine.. The catalysed reaction is 2'-deoxyribonucleotide-(2'-deoxyribose 5'-phosphate)-2'-deoxyribonucleotide-DNA = a 3'-end 2'-deoxyribonucleotide-(2,3-dehydro-2,3-deoxyribose 5'-phosphate)-DNA + a 5'-end 5'-phospho-2'-deoxyribonucleoside-DNA + H(+). Functionally, involved in base excision repair of DNA damaged by oxidation or by mutagenic agents. Acts as a DNA glycosylase that recognizes and removes damaged bases. Has a preference for oxidized purines, such as 7,8-dihydro-8-oxoguanine (8-oxoG). Has AP (apurinic/apyrimidinic) lyase activity and introduces nicks in the DNA strand. Cleaves the DNA backbone by beta-delta elimination to generate a single-strand break at the site of the removed base with both 3'- and 5'-phosphates. The protein is Formamidopyrimidine-DNA glycosylase of Bacillus licheniformis (strain ATCC 14580 / DSM 13 / JCM 2505 / CCUG 7422 / NBRC 12200 / NCIMB 9375 / NCTC 10341 / NRRL NRS-1264 / Gibson 46).